Consider the following 602-residue polypeptide: ATP-dependent DNA helicase II subunit 1 (602 aa).

Residues phenylalanine 268–serine 483 enclose the Ku domain. Residues serine 370, serine 371, and serine 372 each carry the phosphoserine modification.

The protein belongs to the ku70 family. In terms of assembly, heterodimer of YKU70/HDF1 and YKU80/HDF2. In terms of processing, sumoylated by MMS21.

It is found in the nucleus. It localises to the chromosome. Its subcellular location is the telomere. It carries out the reaction ATP + H2O = ADP + phosphate + H(+). In terms of biological role, single-stranded DNA-dependent ATP-dependent helicase. Involved in non-homologous end joining (NHEJ) DNA double strand break repair. DNA-binding is sequence-independent but has a high affinity to nicks in double-stranded DNA and to the ends of duplex DNA. Binds to naturally occurring chromosomal ends, and therefore provides chromosomal end protection. Appears to have a role in recruitment of telomerase and CDC13 to the telomere and the subsequent telomere elongation. Required also for telomere recombination to repair telomeric ends in the absence of telomerase. KU70, of the KU70/KU80 heterodimer, binds to the stem loop of TLC1, the RNA component of telomerase. Involved in telomere maintenance. Interacts with telomeric repeats and subtelomeric sequences thereby controlling telomere length and protecting against subtelomeric rearrangement. Maintains telomeric chromatin, which is involved in silencing the expression of genes located at the telomere. Required for mating-type switching. This chain is ATP-dependent DNA helicase II subunit 1 (YKU70), found in Saccharomyces cerevisiae (strain ATCC 204508 / S288c) (Baker's yeast).